Reading from the N-terminus, the 688-residue chain is Potassium-transporting ATPase ATP-binding subunit (688 aa).

Helical transmembrane passes span 35–55, 62–82, 219–239, and 260–280; these read VMFV…QALG, AGFI…ANFA, IALT…IVTL, and VLIA…LSAI. Catalysis depends on aspartate 313, which acts as the 4-aspartylphosphate intermediate. ATP is bound by residues aspartate 350, glutamate 354, 383-390, and lysine 401; that span reads FSAHTRMS. Mg(2+) contacts are provided by aspartate 524 and aspartate 528. 3 helical membrane passes run 594-614, 622-642, and 668-688; these read FAII…LNVM, AILS…PLAL, and VIVP…VGLA.

This sequence belongs to the cation transport ATPase (P-type) (TC 3.A.3) family. Type IA subfamily. As to quaternary structure, the system is composed of three essential subunits: KdpA, KdpB and KdpC.

The protein localises to the cell inner membrane. The catalysed reaction is K(+)(out) + ATP + H2O = K(+)(in) + ADP + phosphate + H(+). Part of the high-affinity ATP-driven potassium transport (or Kdp) system, which catalyzes the hydrolysis of ATP coupled with the electrogenic transport of potassium into the cytoplasm. This subunit is responsible for energy coupling to the transport system and for the release of the potassium ions to the cytoplasm. The polypeptide is Potassium-transporting ATPase ATP-binding subunit (Dechloromonas aromatica (strain RCB)).